The primary structure comprises 1592 residues: Probable serine/threonine-protein kinase DDB_G0293958 (1592 aa).

One can recognise a Protein kinase 1 domain in the interval 1-302; that stretch reads MTGFEIFKKK…CLNYLKEKLI (302 aa). ATP-binding positions include 2-10 and K43; that span reads TGFEIFKKK. Catalysis depends on D158, which acts as the Proton acceptor. 3 disordered regions span residues 348 to 402, 455 to 526, and 837 to 867; these read INNN…NNNN, FNDI…SNYN, and KNNN…NDKS. The segment covering 349–402 has biased composition (low complexity); sequence NNNNNNNNNNNNNNNNNNNNNNNNNNNNNNNNNNNNNNNNNNNNNNNNNNNNNN. Residues 461 to 518 are a coiled coil; sequence STTGEEEEEEKKDNLKRQNENNQIEQEDKGEKHLKETLNNNNNNNNNNNNNNNNNNNN. Basic and acidic residues predominate over residues 486–496; sequence QEDKGEKHLKE. 2 stretches are compositionally biased toward low complexity: residues 499–526 and 837–864; these read NNNN…SNYN and KNNN…NNSN. In terms of domain architecture, Protein kinase 2 spans 1342–1592; it reads LGTYNLIGDS…KELIECLNKL (251 aa). ATP contacts are provided by residues 1348–1356 and K1376; that span reads IGDSVFRNI. Residue D1474 is the Proton acceptor of the active site.

Belongs to the protein kinase superfamily. Ser/Thr protein kinase family.

The catalysed reaction is L-seryl-[protein] + ATP = O-phospho-L-seryl-[protein] + ADP + H(+). The enzyme catalyses L-threonyl-[protein] + ATP = O-phospho-L-threonyl-[protein] + ADP + H(+). This is Probable serine/threonine-protein kinase DDB_G0293958 from Dictyostelium discoideum (Social amoeba).